The following is a 317-amino-acid chain: MYNYLDFEKPVADLEGQILELKKLAQEQGSVEMGDEISRLEKRSADALKDIYRKLTPWQKAQIARHPDRPHCLEYIDRLFTEFTPLAGDRKFANDEALQAGFGRFNGTPVAIIGQEKGSDTKTRLKHNFGSARPEGYRKAVRIMEMADRFQLPLITFVDTAGAYPGVSAEERGQAEAIARSTAECLKLRVPVISIIIGEGGSGGAIAIAVANRVYMLEHSIYSVISPEGAASILWHDSTRAKDAASNMRITAQDLFDLKIIDGIIPEPLGGAHRGKESVIDATGDIIAASLRSMKDIDGETLKQERRQKFLEIGRNI.

Residues 40–293 (LEKRSADALK…GDIIAASLRS (254 aa)) form the CoA carboxyltransferase C-terminal domain.

It belongs to the AccA family. In terms of assembly, acetyl-CoA carboxylase is a heterohexamer composed of biotin carboxyl carrier protein (AccB), biotin carboxylase (AccC) and two subunits each of ACCase subunit alpha (AccA) and ACCase subunit beta (AccD).

The protein resides in the cytoplasm. The catalysed reaction is N(6)-carboxybiotinyl-L-lysyl-[protein] + acetyl-CoA = N(6)-biotinyl-L-lysyl-[protein] + malonyl-CoA. Its pathway is lipid metabolism; malonyl-CoA biosynthesis; malonyl-CoA from acetyl-CoA: step 1/1. Component of the acetyl coenzyme A carboxylase (ACC) complex. First, biotin carboxylase catalyzes the carboxylation of biotin on its carrier protein (BCCP) and then the CO(2) group is transferred by the carboxyltransferase to acetyl-CoA to form malonyl-CoA. The protein is Acetyl-coenzyme A carboxylase carboxyl transferase subunit alpha of Brucella melitensis biotype 2 (strain ATCC 23457).